The following is a 142-amino-acid chain: Snaclec GPIB-binding protein subunit alpha (142 aa).

Disulfide bonds link cysteine 6–cysteine 17, cysteine 39–cysteine 136, and cysteine 111–cysteine 128. The region spanning 13–137 is the C-type lectin domain; the sequence is HRQYCYKFFQ…CVEGNPFVCK (125 aa).

The protein belongs to the snaclec family. In terms of assembly, heterodimer of subunits alpha and beta; disulfide-linked. As to expression, expressed by the venom gland.

The protein localises to the secreted. Its function is as follows. Binds to platelet GPIb (subunit alpha) (GP1BA) and functions as a receptor blocker for vWF binding to GPIb. The platelet GPIb-binding site resides on the GPIB-BP subunit beta and not on the alpha subunit. At a final concentration of 104 nM totally abolishes vWF-dependent shear-induced platelet aggregation (SIPA) at a high shear stress, but had no effect on SIPA at a low shear stress. The chain is Snaclec GPIB-binding protein subunit alpha from Bothrops jararaca (Jararaca).